The following is a 603-amino-acid chain: Aspartate--tRNA(Asp/Asn) ligase (603 aa).

Glutamate 182 contributes to the L-aspartate binding site. The aspartate stretch occupies residues 206–209 (QLFK). Arginine 228 is a binding site for L-aspartate. ATP contacts are provided by residues 228–230 (RDE) and glutamine 237. An L-aspartate-binding site is contributed by histidine 454. Glutamate 500 lines the ATP pocket. Position 507 (arginine 507) interacts with L-aspartate. 552–555 (GLDR) contributes to the ATP binding site.

This sequence belongs to the class-II aminoacyl-tRNA synthetase family. Type 1 subfamily. In terms of assembly, homodimer.

Its subcellular location is the cytoplasm. The catalysed reaction is tRNA(Asx) + L-aspartate + ATP = L-aspartyl-tRNA(Asx) + AMP + diphosphate. In terms of biological role, aspartyl-tRNA synthetase with relaxed tRNA specificity since it is able to aspartylate not only its cognate tRNA(Asp) but also tRNA(Asn). Reaction proceeds in two steps: L-aspartate is first activated by ATP to form Asp-AMP and then transferred to the acceptor end of tRNA(Asp/Asn). The protein is Aspartate--tRNA(Asp/Asn) ligase of Aquifex aeolicus (strain VF5).